Consider the following 166-residue polypeptide: uncharacterized protein (166 aa).

4Fe-4S ferredoxin-type domains follow at residues 44–73 (ARED…LKQQ), 75–104 (ATLE…PNFP), and 139–166 (STLE…ITLK). [4Fe-4S] cluster is bound by residues Cys53, Cys56, Cys59, Cys63, Cys84, Cys87, Cys90, and Cys94.

This is an uncharacterized protein from Haemophilus influenzae (strain ATCC 51907 / DSM 11121 / KW20 / Rd).